A 937-amino-acid chain; its full sequence is Aconitate hydratase A (937 aa).

The segment at 410-450 is disordered; the sequence is MANEGGFQPGSTSDLDNYNASWPGEGESAAANAEGRPSNPV. A compositionally biased stretch (polar residues) spans 418 to 429; that stretch reads PGSTSDLDNYNA. Positions 433-444 are enriched in low complexity; it reads GEGESAAANAEG. Residues C475, C541, and C544 each coordinate [4Fe-4S] cluster.

It belongs to the aconitase/IPM isomerase family. As to quaternary structure, monomer. It depends on [4Fe-4S] cluster as a cofactor.

The catalysed reaction is citrate = D-threo-isocitrate. It carries out the reaction (2S,3R)-3-hydroxybutane-1,2,3-tricarboxylate = 2-methyl-cis-aconitate + H2O. It functions in the pathway carbohydrate metabolism; tricarboxylic acid cycle; isocitrate from oxaloacetate: step 2/2. The protein operates within organic acid metabolism; propanoate degradation. Functionally, involved in the catabolism of short chain fatty acids (SCFA) via the tricarboxylic acid (TCA)(acetyl degradation route) and probably via the 2-methylcitrate cycle I (propionate degradation route). Catalyzes the reversible isomerization of citrate to isocitrate via cis-aconitate. Could catalyze the hydration of 2-methyl-cis-aconitate to yield (2R,3S)-2-methylisocitrate. The apo form of AcnA functions as a RNA-binding regulatory protein. The protein is Aconitate hydratase A (acn) of Corynebacterium efficiens (strain DSM 44549 / YS-314 / AJ 12310 / JCM 11189 / NBRC 100395).